The following is a 185-amino-acid chain: MGQQVLKSSNEKMEKAVAAYSRELATVRAGRASSSVLDKVQVDYYGAPTPVVQLANITVPEARLLVIQPYDKTSIGDIEKAILKADLGLNPSNDGTVIRIAFPALTEERRRDLVKVVKKYAEEAKVAVRNVRRDGNDDLKKLEKAGEITEDDLRGYTEDIQKETDKYIAKVDEIAKNKEKEIMEV.

This sequence belongs to the RRF family.

It localises to the cytoplasm. Functionally, responsible for the release of ribosomes from messenger RNA at the termination of protein biosynthesis. May increase the efficiency of translation by recycling ribosomes from one round of translation to another. In Bacillus cereus (strain G9842), this protein is Ribosome-recycling factor.